The following is a 475-amino-acid chain: UDP-N-acetylmuramate--L-alanine ligase (475 aa).

An ATP-binding site is contributed by 125–131 (GTHGKTT).

The protein belongs to the MurCDEF family.

It localises to the cytoplasm. The enzyme catalyses UDP-N-acetyl-alpha-D-muramate + L-alanine + ATP = UDP-N-acetyl-alpha-D-muramoyl-L-alanine + ADP + phosphate + H(+). Its pathway is cell wall biogenesis; peptidoglycan biosynthesis. In terms of biological role, cell wall formation. The chain is UDP-N-acetylmuramate--L-alanine ligase from Haemophilus influenzae (strain PittGG).